Reading from the N-terminus, the 87-residue chain is uncharacterized protein (87 aa).

The N-terminal stretch at 1–22 (MKIKTTVAALSVLSVLSFGAFA) is a signal peptide.

It belongs to the BhsA/McbA family.

It localises to the periplasm. This is an uncharacterized protein from Escherichia coli O6:H1 (strain CFT073 / ATCC 700928 / UPEC).